Consider the following 326-residue polypeptide: MRNGTSLLLLAAIALAGAACLTAMGGTAKAAALEPTDSGAPSAIVMFPVGEKPNPKGAAMKPVVFNHLIHEKKIDNCETCHHTGDPVSCSTCHTVEGKAEGNYITLDRAMHATNIAKRAKGNTPVSCVSCHEQQTKERRECAGCHAIVTPKRDEAWCATCHNITPSMTPEQMQKGINGTLLPGDNEALAAETVLAQKTVEPVSPMLAPYKVVIDALADKYEPSNFTHRRHLTSLMERIKDDKLAQAFHNKPEILCATCHHRSPLSLTPPKCGSCHTKEIDKANPGRPNLMAAYHLQCMGCHKGMDVARPRDTDCTTCHKAAPKSAD.

The signal sequence occupies residues 1–30; that stretch reads MRNGTSLLLLAAIALAGAACLTAMGGTAKA. Residues histidine 67, histidine 70, cysteine 77, cysteine 80, histidine 81, histidine 82, cysteine 89, cysteine 92, histidine 93, histidine 111, cysteine 127, cysteine 130, histidine 131, cysteine 141, cysteine 144, histidine 145, cysteine 157, cysteine 160, histidine 161, histidine 227, histidine 230, histidine 248, cysteine 255, cysteine 258, histidine 259, histidine 260, cysteine 271, cysteine 274, histidine 275, histidine 294, cysteine 297, cysteine 300, histidine 301, cysteine 314, cysteine 317, and histidine 318 each contribute to the heme site.

Monomer. Binds 9 heme groups per subunit.

It is found in the periplasm. In terms of biological role, may form part of a transmembrane redox complex through which electrons are transferred to the cytoplasm for reduction of sulfate. This is Nine-heme cytochrome c from Desulfovibrio desulfuricans (strain ATCC 27774 / DSM 6949 / MB).